Consider the following 58-residue polypeptide: MVRWMFIFLALALVSAVLGFSGIAGAAAAVAQVIFYLFLLSLIVSIVFVILGKKNVNR.

Transmembrane regions (helical) follow at residues 4–24 (WMFI…SGIA) and 30–50 (VAQV…VFVI).

Belongs to the UPF0391 family.

Its subcellular location is the cell membrane. The protein is UPF0391 membrane protein VP0082 of Vibrio parahaemolyticus serotype O3:K6 (strain RIMD 2210633).